A 1842-amino-acid chain; its full sequence is Fatty acid synthase subunit alpha (1842 aa).

Residues 101–141 (PAEAPASTSSTPKVETAAAAAPAATPAPAPAQTSAPAAALP) are disordered. Positions 116–139 (TAAAAAPAATPAPAPAQTSAPAAA) are enriched in low complexity. The Carrier domain maps to 145–220 (PKALEVLHTL…AIMQSSFNGS (76 aa)). Serine 180 bears the O-(pantetheine 4'-phosphoryl)serine mark. Serine 604 carries the phosphoserine modification. A Ketosynthase family 3 (KS3) domain is found at 1079–1616 (LQEVVIDHDL…QVGGQVIVIH (538 aa)). Cysteine 1262 acts as the For beta-ketoacyl synthase activity in catalysis. Residues 1304–1332 (GATSNAAKETERGRTPQEMSRPATSTRDG) are disordered. Serine 1412 is modified (phosphoserine). Catalysis depends on for beta-ketoacyl synthase activity residues histidine 1501 and histidine 1542. Positions 1728, 1729, and 1730 each coordinate Mg(2+). Residues 1728 to 1730 (DVE), tyrosine 1754, serine 1764, 1773 to 1783 (EAVFKSLGISG), 1797 to 1800 (SSES), and 1827 to 1829 (ISH) contribute to the acetyl-CoA site. Mg(2+)-binding residues include serine 1828 and histidine 1829.

The protein belongs to the thiolase-like superfamily. Fungal fatty acid synthetase subunit alpha family. In terms of assembly, [Alpha(6)beta(6)] hexamers of two multifunctional subunits (alpha and beta).

The catalysed reaction is acetyl-CoA + n malonyl-CoA + 2n NADPH + 4n H(+) = a long-chain-acyl-CoA + n CoA + n CO2 + 2n NADP(+).. The enzyme catalyses a fatty acyl-[ACP] + malonyl-[ACP] + H(+) = a 3-oxoacyl-[ACP] + holo-[ACP] + CO2. It catalyses the reaction a (3R)-hydroxyacyl-[ACP] + NADP(+) = a 3-oxoacyl-[ACP] + NADPH + H(+). In terms of biological role, fatty acid synthetase catalyzes the formation of long-chain fatty acids from acetyl-CoA, malonyl-CoA and NADPH. The alpha subunit contains domains for: acyl carrier protein, 3-oxoacyl-[acyl-carrier-protein] reductase, and 3-oxoacyl-[acyl-carrier-protein] synthase. This subunit coordinates the binding of the six beta subunits to the enzyme complex. The chain is Fatty acid synthase subunit alpha (fas2) from Schizosaccharomyces pombe (strain 972 / ATCC 24843) (Fission yeast).